A 161-amino-acid chain; its full sequence is Urease accessory protein UreE (161 aa).

This sequence belongs to the UreE family.

Its subcellular location is the cytoplasm. Functionally, involved in urease metallocenter assembly. Binds nickel. Probably functions as a nickel donor during metallocenter assembly. The sequence is that of Urease accessory protein UreE from Arthrobacter sp. (strain FB24).